The chain runs to 648 residues: PTS system N-acetylglucosamine-specific EIICBA component (648 aa).

Residue Met-1 is modified to N-formylmethionine. In terms of domain architecture, PTS EIIC type-1 spans 1–371 (MNILGFFQRL…FNLKTPGRED (371 aa)). A run of 12 helical transmembrane segments spans residues 16–36 (LPIA…PDLL), 38–58 (VAFI…IFAI), 70–90 (GAAA…MVTI), 92–112 (PEIN…GAAY), 132–152 (FVPI…GYVW), 159–179 (IHAG…IFGF), 192–212 (VLNT…GTVF), 232–252 (GFFP…YFAA), 260–280 (VGGM…TEPL), 282–302 (FLFM…TGIS), 303–323 (LFVA…GAID), and 339–359 (MLLV…SLVI). The 83-residue stretch at 390-472 (TQLATNYIAA…KKVVARGPVA (83 aa)) folds into the PTS EIIB type-1 domain. The Phosphocysteine intermediate; for EIIB activity role is filled by Cys-412. Cys-412 is modified (phosphocysteine; by EIIA). A PTS EIIA type-1 domain is found at 517–621 (DEAFASKAVG…SMISPVVCSN (105 aa)). Zn(2+) is bound by residues His-554 and His-569. Catalysis depends on His-569, which acts as the Tele-phosphohistidine intermediate; for EIIA activity. The residue at position 569 (His-569) is a Phosphohistidine; by HPr.

It depends on Zn(2+) as a cofactor. 60% of isolated protein was N-formylated.

The protein localises to the cell inner membrane. It carries out the reaction N(pros)-phospho-L-histidyl-[protein] + N-acetyl-D-glucosamine(out) = N-acetyl-D-glucosamine 6-phosphate(in) + L-histidyl-[protein]. P-chloromercuribenzoate inhibits the accumulation of both N-acetyl-D-glucosamine and antibiotic streptozotocin (2-deoxy-2-(3-methyl-3-nitrosoureido)-D-glucopyranose). N-acetyl-D-glucosamine is a competitive inhibitor for the uptake of streptozotocin. Its function is as follows. The phosphoenolpyruvate-dependent sugar phosphotransferase system (sugar PTS), a major carbohydrate active transport system, catalyzes the phosphorylation of incoming sugar substrates concomitantly with their translocation across the cell membrane. This system is involved in N-acetylglucosamine transport. It can also transport and phosphorylate the antibiotic streptozotocin. Could play a significant role in the recycling of peptidoglycan. The chain is PTS system N-acetylglucosamine-specific EIICBA component from Escherichia coli (strain K12).